A 171-amino-acid polypeptide reads, in one-letter code: UPF0763 protein HPSH_03535 (171 aa).

This sequence belongs to the UPF0763 family.

In Helicobacter pylori (strain Shi470), this protein is UPF0763 protein HPSH_03535.